Reading from the N-terminus, the 170-residue chain is Protein AIG2 A (170 aa).

Position 15–20 (15–20 (YGSFQE)) interacts with substrate. The Proton acceptor role is filled by Glu83. Positions 147 to 162 (KNPNGRSREEFEKFVQ) are enriched in basic and acidic residues. The interval 147–170 (KNPNGRSREEFEKFVQDDSSPASA) is disordered.

The protein belongs to the gamma-glutamylcyclotransferase family. Ubiquitous.

Functionally, putative gamma-glutamylcyclotransferase. In Arabidopsis thaliana (Mouse-ear cress), this protein is Protein AIG2 A.